Here is a 388-residue protein sequence, read N- to C-terminus: Processive diacylglycerol beta-glucosyltransferase (388 aa).

Belongs to the glycosyltransferase 28 family. UgtP subfamily.

It is found in the cell membrane. It carries out the reaction a 1,2-diacyl-3-O-(beta-D-glucopyranosyl)-sn-glycerol + UDP-alpha-D-glucose = a 1,2-diacyl-3-O-(beta-D-Glc-(1-&gt;6)-beta-D-Glc)-sn-glycerol + UDP + H(+). The catalysed reaction is a 1,2-diacyl-3-O-(beta-D-Glc-(1-&gt;6)-beta-D-Glc)-sn-glycerol + UDP-alpha-D-glucose = a 1,2-diacyl-3-O-(beta-D-Glc-(1-&gt;6)-beta-D-Glc-(1-&gt;6)-beta-D-Glc)-sn-glycerol + UDP + H(+). The enzyme catalyses a 1,2-diacyl-sn-glycerol + UDP-alpha-D-glucose = a 1,2-diacyl-3-O-(beta-D-glucopyranosyl)-sn-glycerol + UDP + H(+). It functions in the pathway glycolipid metabolism; diglucosyl-diacylglycerol biosynthesis. In terms of biological role, processive glucosyltransferase involved in the biosynthesis of both the bilayer- and non-bilayer-forming membrane glucolipids. Is able to successively transfer up to three glucosyl residues to diacylglycerol (DAG), thereby catalyzing the formation of beta-monoglucosyl-DAG (3-O-(beta-D-glucopyranosyl)-1,2-diacyl-sn-glycerol), beta-diglucosyl-DAG (3-O-(beta-D-glucopyranosyl-beta-(1-&gt;6)-D-glucopyranosyl)-1,2-diacyl-sn-glycerol) and beta-triglucosyl-DAG (3-O-(beta-D-glucopyranosyl-beta-(1-&gt;6)-D-glucopyranosyl-beta-(1-&gt;6)-D-glucopyranosyl)-1,2-diacyl-sn-glycerol). Beta-diglucosyl-DAG is the predominant glycolipid found in Bacillales and is also used as a membrane anchor for lipoteichoic acid (LTA). This is Processive diacylglycerol beta-glucosyltransferase from Bacillus cereus (strain ZK / E33L).